The chain runs to 478 residues: Serine/threonine-protein phosphatase 2A activator 1 (478 aa).

The tract at residues 359–478 is disordered; it reads DPSAIPPPSR…DITTKAPWAK (120 aa). Residues 396 to 419 are compositionally biased toward low complexity; that stretch reads APWATASQSTPPPSTGTAAPWATS.

Belongs to the PTPA-type PPIase family.

The protein localises to the cytoplasm. Its subcellular location is the nucleus. It carries out the reaction [protein]-peptidylproline (omega=180) = [protein]-peptidylproline (omega=0). Its function is as follows. PPIases accelerate the folding of proteins. It catalyzes the cis-trans isomerization of proline imidic peptide bonds in oligopeptides. Acts as a regulatory subunit for PP2A-like phosphatases modulating their activity or substrate specificity, probably by inducing a conformational change in the catalytic subunit, a direct target of the PPIase. Can reactivate inactive phosphatase PP2A-phosphatase methylesterase complexes (PP2Ai) in presence of ATP and Mg(2+) by dissociating the inactive form from the complex. This chain is Serine/threonine-protein phosphatase 2A activator 1 (rrd1), found in Aspergillus oryzae (strain ATCC 42149 / RIB 40) (Yellow koji mold).